The chain runs to 334 residues: Probable 2-ketogluconate reductase (334 aa).

NAD(+) is bound by residues 164–165 (RI), 244–246 (AGR), and Asp-270. Arg-246 is an active-site residue. Glu-275 is a catalytic residue. His-294 functions as the Proton donor in the catalytic mechanism. Position 294–297 (294–297 (HIGT)) interacts with NAD(+).

This sequence belongs to the D-isomer specific 2-hydroxyacid dehydrogenase family.

It localises to the cytoplasm. It carries out the reaction D-gluconate + NADP(+) = 2-dehydro-D-gluconate + NADPH + H(+). Catalyzes the NADPH-dependent reduction of 2,5-diketo-D-gluconate (25DKG) to 5-keto-D-gluconate (5KDG), 2-keto-D-gluconate (2KDG) to D-gluconate, and 2-keto-L-gulonate (2KLG) to L-idonate (IA). The protein is Probable 2-ketogluconate reductase (tkrA) of Dictyostelium discoideum (Social amoeba).